The following is a 568-amino-acid chain: MSHRSDTLPVPSGQRRGRVPRDHSIYTQLLEITLHLQQAMTEHFVQLTSRQGLSLEERRHTEAICEHEALLSRLICRMINLLQSGAASGLELQVPLPSEDSRGDVRYGQRAQLSGQPDPVPQLSDCEAAFVNRDLSIRGIDISVFYQSSFQDYNAYQKDKYHKDKNTLGFINLGTSENKLCMDLMTERLQESDMNCIEDTLLQYPDWRGQPFLREEVARFLTYYCRAPTRLDPENVVVLNGCCSVFCALAMVLCDPGEAFLVPAPFYGGFAFSSRLYAKVELIPVHLESEVTVTNTHPFQLTVDKLEEALLEARLEGKKVRGLVLINPQNPLGDIYSPDSLMKYLEFAKRYNLHVIIDEIYMLSVFDESITFHSILSMKSLPDSNRTHVIWGTSKDFGISGFRFGALYTHNKEVASAVSAFGYLHSISGITQHKLCQLLQNTEWIDKVYLPTNCYRLREAHKYITAELKALEIPFHNRSSGLYVWINLKKYLDPCTFEEERLLYCRFLDNKLLLSRGKTYMCKEPGWFCLIFADELPRLKLAMRRFCDVLQEQKEALIVKQLEDAMRE.

Residues 1–21 are disordered; sequence MSHRSDTLPVPSGQRRGRVPR. An N6-(pyridoxal phosphate)lysine modification is found at lysine 395.

It belongs to the class-I pyridoxal-phosphate-dependent aminotransferase family.

This is Probable inactive 1-aminocyclopropane-1-carboxylate synthase-like protein 2 (ACCSL) from Homo sapiens (Human).